Reading from the N-terminus, the 177-residue chain is UPF0114 protein HPAG1_0183 (177 aa).

A run of 4 helical transmembrane segments spans residues 15–35 (WLLA…GYVF), 54–74 (LVLS…VLMV), 102–122 (FNAL…IFLL), and 145–165 (PIFW…LAAV).

The protein belongs to the UPF0114 family.

Its subcellular location is the cell membrane. This Helicobacter pylori (strain HPAG1) protein is UPF0114 protein HPAG1_0183.